The following is a 475-amino-acid chain: Eukaryotic translation initiation factor 2 subunit 3 (475 aa).

The region spanning 38 to 247 (QATINIGTIG…IVNKIPVPPR (210 aa)) is the tr-type G domain. The tract at residues 47–54 (GHVAHGKS) is G1. 50–55 (AHGKST) serves as a coordination point for GTP. Residues 75–79 (NITIK) form a G2 region. A G3 region spans residues 133 to 136 (DCPG). Residues 189-192 (NKID) and 224-226 (SAQ) contribute to the GTP site. A G4 region spans residues 189–192 (NKID). Positions 224–226 (SAQ) are G5. The interval 456–468 (GQIFGGKTITPVL) is interacts with CDC123.

Belongs to the TRAFAC class translation factor GTPase superfamily. Classic translation factor GTPase family. EIF2G subfamily. In terms of assembly, eukaryotic translation initiation factor 2 eIF2 is a heterotrimeric complex composed of an alpha, a beta and a gamma subunit. The factors eIF-1, eIF-2, eIF-3, TIF5/eIF-5 and methionyl-tRNAi form a multifactor complex (MFC) that may bind to the 40S ribosome.

The protein resides in the cytoplasm. The protein localises to the cytosol. It carries out the reaction GTP + H2O = GDP + phosphate + H(+). As a subunit of eukaryotic initiation factor 2 eIF2, involved in the early steps of protein synthesis. In the presence of GTP, eIF-2 forms a ternary complex with initiator tRNA Met-tRNAi and then recruits the 40S ribosomal complex and initiation factors eIF-1, eIF-1A and eIF-3 to form the 43S pre-initiation complex (43S PIC), a step that determines the rate of protein translation. The 43S PIC binds to mRNA and scans downstream to the initiation codon, where it forms a 48S initiation complex by codon-anticodon base pairing. This leads to the displacement of eIF-1 to allow GTPase-activating protein (GAP) eIF-5-mediated hydrolysis of eIF2-bound GTP. Hydrolysis of GTP and release of Pi, which makes GTP hydrolysis irreversible, causes the release of the eIF-2-GDP binary complex from the 40S subunit, an event that is essential for the subsequent joining of the 60S ribosomal subunit to form an elongation-competent 80S ribosome. In order for eIF-2 to recycle and catalyze another round of initiation, the GDP bound to eIF-2 must be exchanged with GTP by way of a reaction catalyzed by GDP-GTP exchange factor (GEF) eIF-2B. This is Eukaryotic translation initiation factor 2 subunit 3 from Drosophila melanogaster (Fruit fly).